The chain runs to 282 residues: UPF0761 membrane protein HAPS_1376 (282 aa).

The next 6 membrane-spanning stretches (helical) occupy residues 32-52 (LLSLVPLIMVVFSVFTLLPIF), 89-109 (MGIISIIGLVVVAVMLISSID), 124-144 (VILSFVVYLAVLIFAPIFAGA), 170-190 (LLKFIPFVLTWLLFALVYLIV), 202-222 (VGALFAGVFFTLGKQIFIWYI), and 234-254 (ALATIPIMIVWIHLSWQVVLL).

It belongs to the UPF0761 family.

It localises to the cell inner membrane. The polypeptide is UPF0761 membrane protein HAPS_1376 (Glaesserella parasuis serovar 5 (strain SH0165) (Haemophilus parasuis)).